The chain runs to 310 residues: Tyrosine recombinase XerC (310 aa).

The Core-binding (CB) domain maps to 1-92 (MDELIKEFDR…SLRAFFKYLH (92 aa)). The Tyr recombinase domain occupies 113 to 300 (YIPAVLSVDE…SVNRLMAVYD (188 aa)). Catalysis depends on residues Arg-153, Lys-177, His-252, Arg-255, and His-278. Residue Tyr-287 is the O-(3'-phospho-DNA)-tyrosine intermediate of the active site.

It belongs to the 'phage' integrase family. XerC subfamily. As to quaternary structure, forms a cyclic heterotetrameric complex composed of two molecules of XerC and two molecules of XerD.

The protein resides in the cytoplasm. Functionally, site-specific tyrosine recombinase, which acts by catalyzing the cutting and rejoining of the recombining DNA molecules. The XerC-XerD complex is essential to convert dimers of the bacterial chromosome into monomers to permit their segregation at cell division. It also contributes to the segregational stability of plasmids. The sequence is that of Tyrosine recombinase XerC from Syntrophus aciditrophicus (strain SB).